An 891-amino-acid chain; its full sequence is Extended synaptotagmin-3 (891 aa).

Residues 1 to 30 (MQPEEPCAPSAPGGPDVPERGQRSRDPGPR) form a disordered region. Residues 1–32 (MQPEEPCAPSAPGGPDVPERGQRSRDPGPRLS) lie on the Cytoplasmic side of the membrane. Basic and acidic residues predominate over residues 17–28 (VPERGQRSRDPG). A helical membrane pass occupies residues 33 to 53 (GQLLPELYSFVARVLFYLAPV). Residue Tyr-54 is a topological domain, lumenal. A helical transmembrane segment spans residues 55–75 (LAGYLGLSVTWLLLGALLWMW). Topologically, residues 76-891 (WRRNRRGKLG…ELTADGQPRS (816 aa)) are cytoplasmic. The 178-residue stretch at 118–295 (DVERVEWANK…LPNRVTVPVK (178 aa)) folds into the SMP-LTD domain. C2 domains follow at residues 292 to 412 (VPVK…DEWF) and 430 to 570 (SLLT…QLDH). Ca(2+)-binding residues include Lys-325, Asp-326, Asp-336, Asp-383, Glu-384, Asp-385, Asp-387, Asp-389, and Asp-390. The interval 652-711 (SAATTDPEPMPEPQGPGPEPKGKDSARGLCESPGKKKNPATTFLTVPGLHSPGPIKSPRP) is disordered. Positions 659–670 (EPMPEPQGPGPE) are enriched in pro residues. The 123-residue stretch at 759–881 (RLGEIQLTVR…DLIKGFSQWY (123 aa)) folds into the C2 3 domain. The tract at residues 806-813 (RRWASRKK) is required for phosphatidylinositol 4,5-bisphosphate-dependent location at the cell membrane.

It belongs to the extended synaptotagmin family.

It is found in the cell membrane. It localises to the endoplasmic reticulum membrane. Tethers the endoplasmic reticulum to the cell membrane and promotes the formation of appositions between the endoplasmic reticulum and the cell membrane. Binds glycerophospholipids in a barrel-like domain and may play a role in cellular lipid transport. In Mus musculus (Mouse), this protein is Extended synaptotagmin-3 (Esyt3).